We begin with the raw amino-acid sequence, 273 residues long: Undecaprenyl-diphosphatase (273 aa).

The next 9 membrane-spanning stretches (helical) occupy residues 1–21 (MEPI…FLPV), 39–59 (PALF…LIVF), 63–83 (LGMM…GIAP), 92–112 (LKLA…GLGL), 118–138 (LFFS…LLWL), 165–185 (GLAV…GLFL), 195–215 (FSFL…AVDL), 225–245 (ATVL…KVLI), and 252–272 (RFYL…WIGM).

It belongs to the UppP family.

It is found in the cell inner membrane. It carries out the reaction di-trans,octa-cis-undecaprenyl diphosphate + H2O = di-trans,octa-cis-undecaprenyl phosphate + phosphate + H(+). In terms of biological role, catalyzes the dephosphorylation of undecaprenyl diphosphate (UPP). Confers resistance to bacitracin. This is Undecaprenyl-diphosphatase from Desulfosudis oleivorans (strain DSM 6200 / JCM 39069 / Hxd3) (Desulfococcus oleovorans).